A 149-amino-acid polypeptide reads, in one-letter code: MGAFSEKQESLVKSSWEAFKQNVPHHSAVFYTLILEKAPAAQNMFSFLSNGVDPNNPKLKAHAEKVFKMTVDSAVQLRAKGEVVLADPTLGSVHVQKGVLDPHFLVVKEALLKTFKEAVGDKWNDELGNAWEVAYDELAAAIKKAMGSA.

The Globin domain maps to 3 to 147 (AFSEKQESLV…LAAAIKKAMG (145 aa)). Residue tyrosine 31 is modified to Nitrated tyrosine. Serine 46 provides a ligand contact to heme b. At serine 46 the chain carries Phosphoserine. Histidine 62 provides a ligand contact to O2. Heme b contacts are provided by lysine 65, histidine 94, and lysine 97. Tyrosine 135 is subject to Nitrated tyrosine.

The protein belongs to the plant globin family. In terms of assembly, monomer. Nitrated in effective nodules and particularly in hypoxic conditions; this mechanism may play a protective role in the symbiosis by buffering toxic peroxynitrite NO(2)(-). Nitration level decrease during nodule senescence. Post-translationally, phosphorylation at Ser-46 disrupts the molecular environment of its porphyrin ring oxygen binding pocket, thus leading to a reduced oxygen consumption and to the delivery of oxygen O(2) to symbiosomes. In terms of tissue distribution, root nodules.

It is found in the cytoplasm. It localises to the cytosol. The protein localises to the nucleus. Leghemoglobin that reversibly binds oxygen O(2) through a pentacoordinated heme iron. In root nodules, facilitates the diffusion of oxygen to the bacteroids while preventing the bacterial nitrogenase from being inactivated by buffering dioxygen, nitric oxide and carbon monoxide, and promoting the formation of reactive oxygen species (ROS, e.g. H(2)O(2)). This role is essential for symbiotic nitrogen fixation (SNF). This is Leghemoglobin from Canavalia lineata (Beach bean).